The chain runs to 493 residues: MLKALFLTMLTLALVKSQDTEETITYTQCTDGYEWDPVRQQCKDIDECDIVPDACKGGMKCVNHYGGYLCLPKTAQIIVNNEQPQQETQPAEGTSGATTGVVAASSMATSGVLPGGGFVASAAAVAGPEMQTGRNNFVIRRNPADPQRIPSNPSHRIQCAAGYEQSEHNVCQDIDECTAGTHNCRADQVCINLRGSFACQCPPGYQKRGEQCVDIDECTIPPYCHQRCVNTPGSFYCQCSPGFQLAANNYTCVDINECDASNQCAQQCYNILGSFICQCNQGYELSSDRLNCEDIDECRTSSYLCQYQCVNEPGKFSCMCPQGYQVVRSRTCQDINECETTNECREDEMCWNYHGGFRCYPRNPCQDPYILTPENRCVCPVSNAMCRELPQSIVYKYMSIRSDRSVPSDIFQIQATTIYANTINTFRIKSGNENGEFYLRQTSPVSAMLVLVKSLSGPREHIVDLEMLTVSSIGTFRTSSVLRLTIIVGPFSF.

Residues 1-17 (MLKALFLTMLTLALVKS) form the signal peptide. One can recognise an EGF-like 1; atypical domain in the interval 26–71 (YTQCTDGYEWDPVRQQCKDIDECDIVPDACKGGMKCVNHYGGYLCL). Residues 173–213 (DIDECTAGTHNCRADQVCINLRGSFACQCPPGYQKRGEQCV) form the EGF-like 2; calcium-binding domain. 15 disulfides stabilise this stretch: Cys177–Cys190, Cys184–Cys199, Cys201–Cys212, Cys218–Cys228, Cys224–Cys237, Cys239–Cys252, Cys258–Cys268, Cys264–Cys277, Cys279–Cys292, Cys298–Cys309, Cys305–Cys318, Cys320–Cys332, Cys338–Cys350, Cys344–Cys359, and Cys365–Cys377. Residues 214–253 (DIDECTIPPYCHQRCVNTPGSFYCQCSPGFQLAANNYTCV) form the EGF-like 3; calcium-binding domain. Residue Asn249 is glycosylated (N-linked (GlcNAc...) asparagine). The EGF-like 4; calcium-binding domain occupies 254–293 (DINECDASNQCAQQCYNILGSFICQCNQGYELSSDRLNCE). A mediates interaction with TIMP3 region spans residues 259–493 (DASNQCAQQC…LTIIVGPFSF (235 aa)). Positions 294 to 333 (DIDECRTSSYLCQYQCVNEPGKFSCMCPQGYQVVRSRTCQ) constitute an EGF-like 5; calcium-binding domain. One can recognise an EGF-like 6; calcium-binding domain in the interval 334-378 (DINECETTNECREDEMCWNYHGGFRCYPRNPCQDPYILTPENRCV).

It belongs to the fibulin family. In terms of assembly, interacts with ECM1. Interacts with TIMP3. In the eye, associated with photoreceptor outer and inner segment regions, the nerve fiber layer, outer nuclear layer and inner and outer plexiform layers of the retina.

Its subcellular location is the secreted. The protein localises to the extracellular space. It localises to the extracellular matrix. Its function is as follows. Binds EGFR, the EGF receptor, inducing EGFR autophosphorylation and the activation of downstream signaling pathways. May play a role in cell adhesion and migration. May function as a negative regulator of chondrocyte differentiation. In the olfactory epithelium, it may regulate glial cell migration, differentiation and the ability of glial cells to support neuronal neurite outgrowth. The sequence is that of EGF-containing fibulin-like extracellular matrix protein 1 (EFEMP1) from Homo sapiens (Human).